The sequence spans 561 residues: Chaperonin GroEL 1 (561 aa).

ATP is bound by residues 29–32, 86–90, Gly413, and Asp495; these read TMGP and DGTTT.

The protein belongs to the chaperonin (HSP60) family. In terms of assembly, forms a cylinder of 14 subunits composed of two heptameric rings stacked back-to-back. Interacts with the co-chaperonin GroES.

It localises to the cytoplasm. The enzyme catalyses ATP + H2O + a folded polypeptide = ADP + phosphate + an unfolded polypeptide.. In terms of biological role, together with its co-chaperonin GroES, plays an essential role in assisting protein folding. The GroEL-GroES system forms a nano-cage that allows encapsulation of the non-native substrate proteins and provides a physical environment optimized to promote and accelerate protein folding. The sequence is that of Chaperonin GroEL 1 from Trichodesmium erythraeum (strain IMS101).